The primary structure comprises 485 residues: Glutamyl-tRNA(Gln) amidotransferase subunit A (485 aa).

Active-site charge relay system residues include Lys-79 and Ser-154. Ser-178 serves as the catalytic Acyl-ester intermediate.

The protein belongs to the amidase family. GatA subfamily. As to quaternary structure, heterotrimer of A, B and C subunits.

It carries out the reaction L-glutamyl-tRNA(Gln) + L-glutamine + ATP + H2O = L-glutaminyl-tRNA(Gln) + L-glutamate + ADP + phosphate + H(+). Allows the formation of correctly charged Gln-tRNA(Gln) through the transamidation of misacylated Glu-tRNA(Gln) in organisms which lack glutaminyl-tRNA synthetase. The reaction takes place in the presence of glutamine and ATP through an activated gamma-phospho-Glu-tRNA(Gln). The polypeptide is Glutamyl-tRNA(Gln) amidotransferase subunit A (Clostridium botulinum (strain Eklund 17B / Type B)).